Consider the following 131-residue polypeptide: Large ribosomal subunit protein bL19 (131 aa).

It belongs to the bacterial ribosomal protein bL19 family.

Functionally, this protein is located at the 30S-50S ribosomal subunit interface and may play a role in the structure and function of the aminoacyl-tRNA binding site. This chain is Large ribosomal subunit protein bL19, found in Anaeromyxobacter dehalogenans (strain 2CP-C).